The chain runs to 809 residues: MKRAGTLRLLSDLSNFTGAARLRELLAGDPAILVRCSPDGRHLLLLRPPGSPAPQLLVAVRGPGLPLERAWSEGDPSPLDVFFVPWLARPALILVWESGLTEVWGVGMEPGWKLLQSTELCPDGGARVMAVAATRGRLVWCEERQPGVEDQPGQLSMAFNHCVCVKTLDTSGEAGTKLGCTHILLHHCPSFGLIASRKELFLVPTSTTWPGVAHVLLIWSPSKGKVIVAAPSLGLSHSKSLNPKQGDTWDFRTLLRGLPGFLSPREPLAVHTWAPSSQGLLLLDLKGKVSLVQCHGGTRTVGLLQEAPVGLQGSAALGTFHGTLACVLGSTLELLDMSSGRLLERKVLSTDRVHLLEPPAPGVKNEEDLETRGALRLLSALGLFCVCWEAPQGLEVPSDKDLVFEEACGYYQRRSLRGTQLTPEELRHNSMFRAPQALASILQGHLPPSALLTTLRAELRDYRSIEQLKAQLVAGDDEETGWTELAEHEVARLLRTHLTGDQLAQFNTIFQALPTAAWSATLQALQLQPDRSGRLRSQAPPDVWKKVLRAPTAGKEHPNGILPPFELLCQCLGQLEPQWLPPFVELAQQQGGPGWGAEGPSLPLYRRALSVLGEEGKRPEALELELLLGSGRPKAVLQAVRQLIKKEQWERALEAGLTLDSSSPLLRSEIFNLLLAEFAQHRRLDTHLPLLCRLCPPEVAPDELLLLLRTHLPDDAGATPFPEPGAEPGAEPPLTVGLVRALLEQTGAQGRSSGPVQSTFEDILWDSGTPPPTPPRGPMTTLQASDHPGQEAWGPSGQGLGAADVGVHS.

Residues Gly-747 to Phe-760 show a composition bias toward polar residues. The interval Gly-747–Ser-809 is disordered.

Component of the biogenesis of lysosome-related organelles complex-2 (or BLOC2) composed of HPS3, HPS5 and HPS6. Interacts with HPS5 and HPS3. Interacts with biogenesis of lysosome-related organelles complex-1 (BLOC1). Interacts with AP-3 complex. Interacts with DCTN1 and dynein intermediate chain.

The protein localises to the microsome membrane. The protein resides in the cytoplasm. It localises to the cytosol. Its subcellular location is the early endosome membrane. It is found in the lysosome membrane. In terms of biological role, may regulate the synthesis and function of lysosomes and of highly specialized organelles, such as melanosomes and platelet dense granules. Acts as a cargo adapter for the dynein-dynactin motor complex to mediate the transport of lysosomes from the cell periphery to the perinuclear region. Facilitates retrograde lysosomal trafficking by linking the motor complex to lysosomes, and perinuclear positioning of lysosomes is crucial for the delivery of endocytic cargos to lysosomes, for lysosome maturation and functioning. The protein is BLOC-2 complex member HPS6 (Hps6) of Rattus norvegicus (Rat).